We begin with the raw amino-acid sequence, 454 residues long: uncharacterized protein (454 aa).

Positions 1–18 are cleaved as a signal peptide; sequence MRRFTLFVFFLSISIAYA.

This is an uncharacterized protein from Caenorhabditis elegans.